A 448-amino-acid polypeptide reads, in one-letter code: Tubulin beta chain (448 aa).

Residues Gln-11, Glu-69, Ser-138, Gly-142, Thr-143, Gly-144, Asn-204, and Asn-226 each coordinate GTP. Residue Glu-69 participates in Mg(2+) binding. The segment at 425 to 448 (YQDAGVDEEEEEYDEEAPVEEPLE) is disordered. Positions 429 to 448 (GVDEEEEEYDEEAPVEEPLE) are enriched in acidic residues.

This sequence belongs to the tubulin family. In terms of assembly, dimer of alpha and beta chains. A typical microtubule is a hollow water-filled tube with an outer diameter of 25 nm and an inner diameter of 15 nM. Alpha-beta heterodimers associate head-to-tail to form protofilaments running lengthwise along the microtubule wall with the beta-tubulin subunit facing the microtubule plus end conferring a structural polarity. Microtubules usually have 13 protofilaments but different protofilament numbers can be found in some organisms and specialized cells. Mg(2+) is required as a cofactor.

The protein resides in the cytoplasm. It is found in the cytoskeleton. Tubulin is the major constituent of microtubules, a cylinder consisting of laterally associated linear protofilaments composed of alpha- and beta-tubulin heterodimers. Microtubules grow by the addition of GTP-tubulin dimers to the microtubule end, where a stabilizing cap forms. Below the cap, tubulin dimers are in GDP-bound state, owing to GTPase activity of alpha-tubulin. This Metarhizium anisopliae (Entomophthora anisopliae) protein is Tubulin beta chain.